We begin with the raw amino-acid sequence, 173 residues long: Crossover junction endodeoxyribonuclease RuvC (173 aa).

Catalysis depends on residues aspartate 8, glutamate 69, and aspartate 141. The Mg(2+) site is built by aspartate 8, glutamate 69, and aspartate 141.

The protein belongs to the RuvC family. As to quaternary structure, homodimer which binds Holliday junction (HJ) DNA. The HJ becomes 2-fold symmetrical on binding to RuvC with unstacked arms; it has a different conformation from HJ DNA in complex with RuvA. In the full resolvosome a probable DNA-RuvA(4)-RuvB(12)-RuvC(2) complex forms which resolves the HJ. The cofactor is Mg(2+).

The protein localises to the cytoplasm. The catalysed reaction is Endonucleolytic cleavage at a junction such as a reciprocal single-stranded crossover between two homologous DNA duplexes (Holliday junction).. In terms of biological role, the RuvA-RuvB-RuvC complex processes Holliday junction (HJ) DNA during genetic recombination and DNA repair. Endonuclease that resolves HJ intermediates. Cleaves cruciform DNA by making single-stranded nicks across the HJ at symmetrical positions within the homologous arms, yielding a 5'-phosphate and a 3'-hydroxyl group; requires a central core of homology in the junction. The consensus cleavage sequence is 5'-(A/T)TT(C/G)-3'. Cleavage occurs on the 3'-side of the TT dinucleotide at the point of strand exchange. HJ branch migration catalyzed by RuvA-RuvB allows RuvC to scan DNA until it finds its consensus sequence, where it cleaves and resolves the cruciform DNA. The sequence is that of Crossover junction endodeoxyribonuclease RuvC from Xylella fastidiosa (strain Temecula1 / ATCC 700964).